A 355-amino-acid polypeptide reads, in one-letter code: uncharacterized protein (355 aa).

A disordered region spans residues 1-61; it reads MNKKIEKNNN…PKRRGRRPKK (61 aa). The span at 18 to 37 shows a compositional bias: polar residues; the sequence is YESNTTDNQLIMKKNANSGS.

This is an uncharacterized protein from Acanthamoeba polyphaga mimivirus (APMV).